A 107-amino-acid polypeptide reads, in one-letter code: NADH-quinone oxidoreductase subunit K (107 aa).

Transmembrane regions (helical) follow at residues 11–31 (LTHY…GVLL), 36–56 (IVLL…FVAF), and 67–87 (IMVF…LALA).

Belongs to the complex I subunit 4L family. In terms of assembly, NDH-1 is composed of 14 different subunits. Subunits NuoA, H, J, K, L, M, N constitute the membrane sector of the complex.

The protein localises to the cell inner membrane. It carries out the reaction a quinone + NADH + 5 H(+)(in) = a quinol + NAD(+) + 4 H(+)(out). NDH-1 shuttles electrons from NADH, via FMN and iron-sulfur (Fe-S) centers, to quinones in the respiratory chain. The immediate electron acceptor for the enzyme in this species is believed to be ubiquinone. Couples the redox reaction to proton translocation (for every two electrons transferred, four hydrogen ions are translocated across the cytoplasmic membrane), and thus conserves the redox energy in a proton gradient. The polypeptide is NADH-quinone oxidoreductase subunit K (Bdellovibrio bacteriovorus (strain ATCC 15356 / DSM 50701 / NCIMB 9529 / HD100)).